A 757-amino-acid polypeptide reads, in one-letter code: MDVNPTLLFLKVPAQNAISTTFPYTGDPPYSHGTGTGYTMDTVNRTHQYSEKGKWTTNTETGAPQLNPIDGPLPEDNEPSGYAQTDCVLEAMAFLEESHPGIFENSCLETMEVIQQTRVDKLTQGRQTYDWTLNRNQPAATALANTIEVFRSNGMTANESGRLIDFLKDVIESMDKEEMEITTHFQRKRRVRDNMTKKMVTQRTIGKKKQRLNKRSYLIRALTLNTMTKDAERGKLKRRAIATPGMQIRGFVYFVETLARSICEKLEQSGLPVGGNEKKAKLANVVRKMMTNSQDTELSFTITGDNTKWNENQNPRMFLAMITYITRNQPEWFRNVLSIAPIMFSNKMARLGKGYMFESKSMKLRTQIPAEMLASIDLKYFNESTRKKIEKIRPLLIDGTVSLSPGMMMGMFNMLSTVLGVSILNLGQKKYTKTTYWWDGLQSSDDFALIVNAPNHEGIQAGVDRFYRTCKLVGINMSKKKSYINRTGTFEFTSFFYRYGFVANFSMELPSFGVSGINESADMSIGVTVIKNNMINNDLGPATAQMALQLFIKDYRYTYRCHRGDTQIQTRRSFELKKLWEQTRSKAGLLVSDGGPNLYNIRNLHIPEVCLKWELMDEDYQGRLCNPLNPFVSHKEIESVNNAVVMPAHGPAKSMEYDAVATTHSWIPKRNRSILNTSQRGILEDEQMYQKCCNLFEKFFPSSSYRRPVGISSMVEAMVSRARIDARIDFESGRIKKEEFAEIMKICSTIEELRRQK.

Positions 50-82 (SEKGKWTTNTETGAPQLNPIDGPLPEDNEPSGY) are disordered. Residues 55–64 (WTTNTETGAP) show a composition bias toward polar residues. 2 consecutive short sequence motifs (nuclear localization signal) follow at residues 187 to 195 (RKRRVRDNM) and 203 to 216 (RTIG…NKRS). A promoter-binding site region spans residues 249-256 (RGFVYFVE). Positions 286–483 (VRKMMTNSQD…GINMSKKKSY (198 aa)) constitute a RdRp catalytic domain.

The protein belongs to the influenza viruses polymerase PB1 family. In terms of assembly, influenza RNA polymerase is composed of three subunits: PB1, PB2 and PA. Interacts (via N-terminus) with PA (via C-terminus). Interacts (via C-terminus) with PB2 (via N-terminus); this interaction is essential for transcription initiation. In terms of processing, phosphorylated by host PRKCA.

The protein resides in the host nucleus. Its subcellular location is the host cytoplasm. The catalysed reaction is RNA(n) + a ribonucleoside 5'-triphosphate = RNA(n+1) + diphosphate. Its function is as follows. RNA-dependent RNA polymerase which is responsible for replication and transcription of virus RNA segments. The transcription of viral mRNAs occurs by a unique mechanism called cap-snatching. 5' methylated caps of cellular mRNAs are cleaved after 10-13 nucleotides by PA. In turn, these short capped RNAs are used as primers by PB1 for transcription of viral mRNAs. During virus replication, PB1 initiates RNA synthesis and copy vRNA into complementary RNA (cRNA) which in turn serves as a template for the production of more vRNAs. This Influenza A virus (strain A/Singapore/1/1957 H2N2) protein is RNA-directed RNA polymerase catalytic subunit.